The following is a 194-amino-acid chain: Large ribosomal subunit protein bL9 (194 aa).

Belongs to the bacterial ribosomal protein bL9 family.

In terms of biological role, binds to the 23S rRNA. This chain is Large ribosomal subunit protein bL9, found in Rhodopseudomonas palustris (strain BisA53).